We begin with the raw amino-acid sequence, 159 residues long: Protein Smg homolog (159 aa).

The protein belongs to the Smg family.

This Vibrio vulnificus (strain CMCP6) protein is Protein Smg homolog.